The following is a 316-amino-acid chain: Pantothenate kinase (316 aa).

Residue 95–102 (GSVAVGKS) participates in ATP binding.

This sequence belongs to the prokaryotic pantothenate kinase family.

The protein localises to the cytoplasm. It carries out the reaction (R)-pantothenate + ATP = (R)-4'-phosphopantothenate + ADP + H(+). It participates in cofactor biosynthesis; coenzyme A biosynthesis; CoA from (R)-pantothenate: step 1/5. The chain is Pantothenate kinase from Shewanella woodyi (strain ATCC 51908 / MS32).